The sequence spans 327 residues: Aspartate--ammonia ligase (327 aa).

This sequence belongs to the class-II aminoacyl-tRNA synthetase family. AsnA subfamily.

The protein localises to the cytoplasm. It carries out the reaction L-aspartate + NH4(+) + ATP = L-asparagine + AMP + diphosphate + H(+). It participates in amino-acid biosynthesis; L-asparagine biosynthesis; L-asparagine from L-aspartate (ammonia route): step 1/1. This chain is Aspartate--ammonia ligase, found in Bacillus cytotoxicus (strain DSM 22905 / CIP 110041 / 391-98 / NVH 391-98).